A 672-amino-acid polypeptide reads, in one-letter code: DNA mismatch repair protein MutL (672 aa).

The segment covering 443–454 has biased composition (polar residues); it reads SYTSDSNQYENS. The disordered stretch occupies residues 443-469; sequence SYTSDSNQYENSCKSDVDKESKSKTTG. Residues 455-465 are compositionally biased toward basic and acidic residues; the sequence is CKSDVDKESKS.

This sequence belongs to the DNA mismatch repair MutL/HexB family.

Its function is as follows. This protein is involved in the repair of mismatches in DNA. It is required for dam-dependent methyl-directed DNA mismatch repair. May act as a 'molecular matchmaker', a protein that promotes the formation of a stable complex between two or more DNA-binding proteins in an ATP-dependent manner without itself being part of a final effector complex. This is DNA mismatch repair protein MutL from Clostridium botulinum (strain Eklund 17B / Type B).